A 152-amino-acid polypeptide reads, in one-letter code: MLP-like protein 165 (152 aa).

This sequence belongs to the MLP family.

The polypeptide is MLP-like protein 165 (MLP165) (Arabidopsis thaliana (Mouse-ear cress)).